We begin with the raw amino-acid sequence, 1151 residues long: Phospholipid-transporting ATPase NEO1 (1151 aa).

Disordered stretches follow at residues 1–21 (MPNP…NNNQ) and 73–95 (LDNF…THPL). Residues 1–184 (MPNPPSFKSH…LSNAKYNAVT (184 aa)) are Extracellular-facing. The segment covering 12-21 (QNLFNSNNNQ) has biased composition (polar residues). Positions 51 to 104 (EPLSKHNTVGDRESFEMRTVDDLDNFSNHSSDSHRKSSNTDTHPLMYDNRLSQD) are required for endosome-to-Golgi sorting. A Phosphoserine modification is found at Ser-102. The helical transmembrane segment at 185–205 (FVPTLLYEQFKFFYNLYFLVV) threads the bilayer. At 206–209 (ALSQ) the chain is on the cytoplasmic side. A helical membrane pass occupies residues 210–230 (AVPALRIGYLSSYIVPLAFVL). The Extracellular portion of the chain corresponds to 231–367 (TVTMAKEAID…TSNPLSVDNT (137 aa)). A helical membrane pass occupies residues 368–388 (LWANTVLASSGFCIACVVYTG). At 389–416 (RDTRQAMNTTTAKVKTGLLELEINSISK) the chain is on the cytoplasmic side. Residues 417 to 437 (ILCACVFALSILLVAFAGFHN) traverse the membrane as a helical segment. Asp-438 is a topological domain (extracellular). Residues 439–459 (DWYIDILRYLILFSTIIPVSL) traverse the membrane as a helical segment. Over 460 to 947 (RVNLDLAKSV…KLAQFVMHRG (488 aa)) the chain is Cytoplasmic. The active-site 4-aspartylphosphate intermediate is Asp-503. ATP contacts are provided by Asp-503, Lys-504, and Thr-505. A Mg(2+)-binding site is contributed by Asp-503. Thr-505 lines the Mg(2+) pocket. Ser-551 bears the Phosphoserine mark. Glu-597, Phe-640, Ser-642, Lys-645, Lys-664, Arg-693, Thr-694, Thr-774, Gly-775, Asp-776, Arg-856, and Lys-862 together coordinate ATP. Mg(2+) is bound at residue Asp-882. Positions 885 and 886 each coordinate ATP. A Mg(2+)-binding site is contributed by Asp-886. A helical transmembrane segment spans residues 948–968 (LIIAICQAVYSICSLFEPIAL). Over 969–970 (YQ) the chain is Extracellular. A helical membrane pass occupies residues 971–991 (GWLMVGYATCYTMAPVFSLTL). The Cytoplasmic portion of the chain corresponds to 992 to 1020 (DHDIEESLTKIYPELYKELTEGKSLSYKT). The chain crosses the membrane as a helical span at residues 1021 to 1041 (FFVWVLLSLFQGSVIQLFSQA). The Extracellular portion of the chain corresponds to 1042–1052 (FTSLLDTDFTR). The helical transmembrane segment at 1053–1073 (MVAISFTALVVNELIMVALEI) threads the bilayer. At 1074-1078 (YTWNK) the chain is on the cytoplasmic side. Residues 1079 to 1099 (TMLVTEIATLLFYIVSVPFLG) traverse the membrane as a helical segment. Residues 1100–1109 (DYFDLGYMTT) lie on the Extracellular side of the membrane. A helical membrane pass occupies residues 1110–1130 (VNYYAGLLVILLISIFPVWTA). Topologically, residues 1131-1151 (KAIYRRLHPPSYAKVQEFATP) are cytoplasmic. Residues 1131–1151 (KAIYRRLHPPSYAKVQEFATP) are required for endosomal targeting.

This sequence belongs to the cation transport ATPase (P-type) (TC 3.A.3) family. Type IV subfamily. As to quaternary structure, interacts with MON2. Interacts with ANY1. Functions without a CDC50/LEM3 family accessory subunit. Mg(2+) is required as a cofactor.

The protein resides in the endosome membrane. It localises to the golgi apparatus membrane. It carries out the reaction ATP + H2O + phospholipidSide 1 = ADP + phosphate + phospholipidSide 2.. It catalyses the reaction a 1,2-diacyl-sn-glycero-3-phospho-L-serine(out) + ATP + H2O = a 1,2-diacyl-sn-glycero-3-phospho-L-serine(in) + ADP + phosphate + H(+). The enzyme catalyses a 1,2-diacyl-sn-glycero-3-phosphoethanolamine(out) + ATP + H2O = a 1,2-diacyl-sn-glycero-3-phosphoethanolamine(in) + ADP + phosphate + H(+). Its function is as follows. Flippase that catalyzes the hydrolysis of ATP coupled to the transport of lysophosphatidylserine, phosphatidylethanolamine, and phosphatidylserine from the lumenal to the cytosolic leaflet of the Golgi apparatus membrane and ensures the maintenance of asymmetric distribution of phospholipids. Does not appear to transport phosphatidylcholine or sphingomyelin. May be involved in recycling from endosomes by driving the formation of SNX3-dependent recycling tubules. Required for COPI retrograde transport from the Golgi to the endoplasmic reticulum, Golgi-endosome trafficking, and Golgi-dependent protein glycosylation. This is Phospholipid-transporting ATPase NEO1 from Saccharomyces cerevisiae (strain ATCC 204508 / S288c) (Baker's yeast).